We begin with the raw amino-acid sequence, 75 residues long: Large ribosomal subunit protein uL29 (75 aa).

It belongs to the universal ribosomal protein uL29 family.

The polypeptide is Large ribosomal subunit protein uL29 (Ureaplasma urealyticum serovar 10 (strain ATCC 33699 / Western)).